Here is a 119-residue protein sequence, read N- to C-terminus: UPF0102 protein FN1370 (119 aa).

It belongs to the UPF0102 family.

The chain is UPF0102 protein FN1370 from Fusobacterium nucleatum subsp. nucleatum (strain ATCC 25586 / DSM 15643 / BCRC 10681 / CIP 101130 / JCM 8532 / KCTC 2640 / LMG 13131 / VPI 4355).